The sequence spans 208 residues: Urease accessory protein UreE (208 aa).

A disordered region spans residues Ala145–His195.

The protein belongs to the UreE family.

Its subcellular location is the cytoplasm. Involved in urease metallocenter assembly. Binds nickel. Probably functions as a nickel donor during metallocenter assembly. The chain is Urease accessory protein UreE from Azorhizobium caulinodans (strain ATCC 43989 / DSM 5975 / JCM 20966 / LMG 6465 / NBRC 14845 / NCIMB 13405 / ORS 571).